Consider the following 344-residue polypeptide: MTTTPLAPVAQARSLLQLTTAYHQAKALHSAVELGLFDLLADGPATAEEVKDRLRIVHPLAKEFLDALVALELLEADGDRYRNSPAAQAFLVSGASEYLGGTVLQHARKHYHVWAGLTTALQEGEAGSGAEAHGPEAYPKHYEDPERARQVMAHFDTFSSFTAEELARRVDWSGYGSFIDIGGARGNLATRVALAHPHLHGAVFDLPALAPLAGELIRERGLEGRVRFHGGDFLTDPLPSADAVVTGHVLPDWPVPQRRKLLARIHEALPSGGALVVYDLMTDPATTTVHDVLQRLNHGLIRGDSSSSSVEEYRAEIEEAGFRVRQAERIDNLLGDWLIVAVKP.

Residues Asp-205 and 231–233 (GDF) each bind S-adenosyl-L-methionine.

This sequence belongs to the class I-like SAM-binding methyltransferase superfamily. Cation-independent O-methyltransferase family.

It carries out the reaction 4-amino-4-dedimethylamino-anhydrotetracycline + S-adenosyl-L-methionine = 4-methylamino-4-dedimethylamino-anhydrotetracycline + S-adenosyl-L-homocysteine + H(+). The catalysed reaction is 4-methylamino-4-dedimethylamino-anhydrotetracycline + S-adenosyl-L-methionine = anhydrotetracycline + S-adenosyl-L-homocysteine + H(+). Its pathway is antibiotic biosynthesis; oxytetracycline biosynthesis. Its function is as follows. Involved in the biosynthesis of the tetracycline antibiotic, oxytetracycline. Catalyzes the dimethylation of 4-amino-4-de(dimethylamino)anhydrotetracycline (4-amino-ATC) to yield anhydrotetracycline (ATC). Also able to catalyze the dimethylation of 7-chloro-, 6-demethyl-, 2-decarboxamido-2-nitrile-, and 4-methylamino-derivatives of 4-amino-4-de(dimethylamino)anhydrotetracycline. This chain is N,N-dimethyltransferase OxyT, found in Streptomyces rimosus.